A 515-amino-acid polypeptide reads, in one-letter code: Leucine-rich repeat transmembrane neuronal protein 2 (515 aa).

Residues 1–33 form the signal peptide; sequence MGLHFKWPLGAPMLAAIYAMSVVLKMLPALGMA. The LRRNT domain maps to 34-61; that stretch reads CPPKCRCEKLLFYCDSQGFHSVPNATDK. Over 34 to 421 the chain is Extracellular; it reads CPPKCRCEKL…EPDNAIFTQR (388 aa). A glycan (N-linked (GlcNAc...) asparagine) is linked at asparagine 57. 10 LRR repeats span residues 63–83, 86–107, 110–131, 134–155, 158–179, 182–203, 206–227, 230–251, 254–275, and 278–299; these read SLGL…QFAS, QLTW…AFQG, KLKE…TFTQ, NLQN…LFYG, KLQT…LFWD, SLEF…GFAG, KLRE…HFLR, SLHT…MDWT, TLEK…VFET, and NLKI…ILNS. Asparagine 126 carries N-linked (GlcNAc...) asparagine glycosylation. Asparagine 243 carries an N-linked (GlcNAc...) asparagine glycan. An LRRCT domain is found at 311–362; that stretch reads NLWECSPRVCALASWLGSFQGRWEHSILCHSPDHTQGEDILDAVHGFQLCWN. A glycan (N-linked (GlcNAc...) asparagine) is linked at asparagine 362. Residues 422–442 form a helical membrane-spanning segment; sequence VITGTMALLFSFFFIIFIVFI. At 443–515 the chain is on the cytoplasmic side; sequence SRKCCPPTLR…QQLPYKECEV (73 aa). Positions 512–515 match the Involved in DLG4-binding motif; it reads ECEV.

Belongs to the LRRTM family. Interacts with DLG4. Interacts with neurexin NRXN1; interaction is mediated by heparan sulfate glycan modification on neurexin. Expressed in neuronal tissues.

It is found in the cell membrane. Its subcellular location is the postsynaptic cell membrane. Functionally, involved in the development and maintenance of excitatory synapses in the vertebrate nervous system. Regulates surface expression of AMPA receptors and instructs the development of functional glutamate release sites. Acts as a ligand for the presynaptic receptors NRXN1-A and NRXN1-B. This Mus musculus (Mouse) protein is Leucine-rich repeat transmembrane neuronal protein 2 (Lrrtm2).